A 146-amino-acid polypeptide reads, in one-letter code: 3-hydroxyacyl-[acyl-carrier-protein] dehydratase FabZ (146 aa).

H49 is a catalytic residue.

It belongs to the thioester dehydratase family. FabZ subfamily.

The protein localises to the cytoplasm. It carries out the reaction a (3R)-hydroxyacyl-[ACP] = a (2E)-enoyl-[ACP] + H2O. Its function is as follows. Involved in unsaturated fatty acids biosynthesis. Catalyzes the dehydration of short chain beta-hydroxyacyl-ACPs and long chain saturated and unsaturated beta-hydroxyacyl-ACPs. This Pseudomonas fluorescens (strain ATCC BAA-477 / NRRL B-23932 / Pf-5) protein is 3-hydroxyacyl-[acyl-carrier-protein] dehydratase FabZ.